A 151-amino-acid polypeptide reads, in one-letter code: 3-hydroxyacyl-[acyl-carrier-protein] dehydratase FabZ (151 aa).

Histidine 54 is an active-site residue.

This sequence belongs to the thioester dehydratase family. FabZ subfamily.

It is found in the cytoplasm. The catalysed reaction is a (3R)-hydroxyacyl-[ACP] = a (2E)-enoyl-[ACP] + H2O. Its function is as follows. Involved in unsaturated fatty acids biosynthesis. Catalyzes the dehydration of short chain beta-hydroxyacyl-ACPs and long chain saturated and unsaturated beta-hydroxyacyl-ACPs. The protein is 3-hydroxyacyl-[acyl-carrier-protein] dehydratase FabZ of Cronobacter sakazakii (strain ATCC BAA-894) (Enterobacter sakazakii).